A 540-amino-acid polypeptide reads, in one-letter code: Transcription termination/antitermination protein NusA (540 aa).

One can recognise an S1 motif domain in the interval 144–214 (GQVIEARVED…SMWPITLSRS (71 aa)). The region spanning 319–386 (DTSIEIVVPA…QGIFGIKKRR (68 aa)) is the KH domain. The disordered stretch occupies residues 457–540 (VAAPTPTPAP…KQTFDNFDDL (84 aa)). The span at 461–489 (TPTPAPQPTPAPTKVEPVPPPVSVTPKPI) shows a compositional bias: pro residues. Residues 512 to 522 (DDSKTKPEKSS) are compositionally biased toward basic and acidic residues. Polar residues predominate over residues 523–540 (AKTNTPQTKQTFDNFDDL).

It belongs to the NusA family. As to quaternary structure, monomer. Binds directly to the core enzyme of the DNA-dependent RNA polymerase and to nascent RNA.

It localises to the cytoplasm. Functionally, participates in both transcription termination and antitermination. The chain is Transcription termination/antitermination protein NusA from Mycoplasma pneumoniae (strain ATCC 29342 / M129 / Subtype 1) (Mycoplasmoides pneumoniae).